Consider the following 171-residue polypeptide: 6,7-dimethyl-8-ribityllumazine synthase (171 aa).

5-amino-6-(D-ribitylamino)uracil contacts are provided by residues Phe-30, 64-66, and 88-90; these read ALE and AVI. 93-94 lines the (2S)-2-hydroxy-3-oxobutyl phosphate pocket; it reads ET. His-96 serves as the catalytic Proton donor. Asn-121 is a 5-amino-6-(D-ribitylamino)uracil binding site. A (2S)-2-hydroxy-3-oxobutyl phosphate-binding site is contributed by Arg-135.

This sequence belongs to the DMRL synthase family.

The enzyme catalyses (2S)-2-hydroxy-3-oxobutyl phosphate + 5-amino-6-(D-ribitylamino)uracil = 6,7-dimethyl-8-(1-D-ribityl)lumazine + phosphate + 2 H2O + H(+). It participates in cofactor biosynthesis; riboflavin biosynthesis; riboflavin from 2-hydroxy-3-oxobutyl phosphate and 5-amino-6-(D-ribitylamino)uracil: step 1/2. Catalyzes the formation of 6,7-dimethyl-8-ribityllumazine by condensation of 5-amino-6-(D-ribitylamino)uracil with 3,4-dihydroxy-2-butanone 4-phosphate. This is the penultimate step in the biosynthesis of riboflavin. The sequence is that of 6,7-dimethyl-8-ribityllumazine synthase from Polynucleobacter necessarius subsp. necessarius (strain STIR1).